We begin with the raw amino-acid sequence, 89 residues long: Small ribosomal subunit protein uS15 (89 aa).

Belongs to the universal ribosomal protein uS15 family. Part of the 30S ribosomal subunit. Forms a bridge to the 50S subunit in the 70S ribosome, contacting the 23S rRNA.

One of the primary rRNA binding proteins, it binds directly to 16S rRNA where it helps nucleate assembly of the platform of the 30S subunit by binding and bridging several RNA helices of the 16S rRNA. Functionally, forms an intersubunit bridge (bridge B4) with the 23S rRNA of the 50S subunit in the ribosome. The sequence is that of Small ribosomal subunit protein uS15 from Mycobacterium avium (strain 104).